Reading from the N-terminus, the 267-residue chain is Hydroxyethylthiazole kinase (267 aa).

Methionine 49 serves as a coordination point for substrate. The ATP site is built by arginine 124 and threonine 170. Glycine 197 is a substrate binding site.

It belongs to the Thz kinase family. Requires Mg(2+) as cofactor.

The catalysed reaction is 5-(2-hydroxyethyl)-4-methylthiazole + ATP = 4-methyl-5-(2-phosphooxyethyl)-thiazole + ADP + H(+). The protein operates within cofactor biosynthesis; thiamine diphosphate biosynthesis; 4-methyl-5-(2-phosphoethyl)-thiazole from 5-(2-hydroxyethyl)-4-methylthiazole: step 1/1. Catalyzes the phosphorylation of the hydroxyl group of 4-methyl-5-beta-hydroxyethylthiazole (THZ). This chain is Hydroxyethylthiazole kinase, found in Tolumonas auensis (strain DSM 9187 / NBRC 110442 / TA 4).